The sequence spans 338 residues: Ketol-acid reductoisomerase (NADP(+)) (338 aa).

The KARI N-terminal Rossmann domain maps to 1 to 181; the sequence is MKVFYDNDAD…GGTRAGVIET (181 aa). NADP(+) contacts are provided by residues 24-27, Arg-47, Ser-50, Ser-52, and 82-85; these read YGSQ and DEGQ. His-107 is a catalytic residue. Gly-133 serves as a coordination point for NADP(+). The region spanning 182–327 is the KARI C-terminal knotted domain; it reads SFREETETDL…SKLRSMMTWI (146 aa). The Mg(2+) site is built by Asp-190, Glu-194, Glu-226, and Glu-230. A substrate-binding site is contributed by Ser-251.

Belongs to the ketol-acid reductoisomerase family. The cofactor is Mg(2+).

It carries out the reaction (2R)-2,3-dihydroxy-3-methylbutanoate + NADP(+) = (2S)-2-acetolactate + NADPH + H(+). It catalyses the reaction (2R,3R)-2,3-dihydroxy-3-methylpentanoate + NADP(+) = (S)-2-ethyl-2-hydroxy-3-oxobutanoate + NADPH + H(+). It functions in the pathway amino-acid biosynthesis; L-isoleucine biosynthesis; L-isoleucine from 2-oxobutanoate: step 2/4. It participates in amino-acid biosynthesis; L-valine biosynthesis; L-valine from pyruvate: step 2/4. Involved in the biosynthesis of branched-chain amino acids (BCAA). Catalyzes an alkyl-migration followed by a ketol-acid reduction of (S)-2-acetolactate (S2AL) to yield (R)-2,3-dihydroxy-isovalerate. In the isomerase reaction, S2AL is rearranged via a Mg-dependent methyl migration to produce 3-hydroxy-3-methyl-2-ketobutyrate (HMKB). In the reductase reaction, this 2-ketoacid undergoes a metal-dependent reduction by NADPH to yield (R)-2,3-dihydroxy-isovalerate. The polypeptide is Ketol-acid reductoisomerase (NADP(+)) (Acidithiobacillus ferrooxidans (strain ATCC 23270 / DSM 14882 / CIP 104768 / NCIMB 8455) (Ferrobacillus ferrooxidans (strain ATCC 23270))).